Consider the following 160-residue polypeptide: SKP1-like protein 1A (160 aa).

Residues Ile-102–Glu-160 form an interaction with the F-box domain of F-box proteins region.

It belongs to the SKP1 family. As to quaternary structure, part of a SCF E3 ubiquitin ligase complex composed of SKP1, CUL1, RBX1 (RBX1A or RBX1B) and F-box proteins. Interacts with SKIP1, SKIP2, SKIP3, SKIP4, SKIP6, FIB1/SKIP7, SKIP8, PP2A11/SKIP10, SKIP11, PP2B11/SKIP12, PP2A14/SKIP13, SKIP14, SKIP15, SKIP16, SKIP19/FBL20, SKIP20, PP2B1/SKIP21, SKIP22, SKIP23, SKIP24, SKIP25, TULP10/SKIP26, SKIP27, SKIP28/MEE11, AFR/SKIP29, SKIP30, SKIP31, SKIP32/FBP7, SKIP33, SKIP35, ADO1/ZTL, ADO2/LKP2, ADO3/FKF1, AFR, COI1, DOR, EBF1, EBF2, EID1, ORE9, PP2A13/SKIP9, TIR1, UFO, SKP2A, CPR1/CPR30, FBL17, NUP58, At1g55000, At1g67340, At1g78100, At3g04660, At3g61590, At4g38940 and At5g49610. The SKP1A subunit of the SCF E3 ubiquitin ligase complex can interact directly with KIN10, KIN11 and the proteasome subunit PAD1. This interaction can be disrupted by PRL1. In case of polerovirus infection, part of a SCF P0 complex composed of the viral silencing suppressor P0, SKP1 and CUL1. Interacts with turnip yellows virus P0. Interacts with VBF and Agrobacterium virF. Binds to KIB1. As to expression, accumulates only in meristematic cells. Expressed in inflorescence, shoot and root apical meristems, as well as in developing organs such as gametocytes and seeds. Also detected in cortical layer and epidermis of roots, leaves, pith and vascular bundle of young stem, young floral buds and organ primordia, pollen and through the valve of siliques. Not detectable in mature root tissues.

Its subcellular location is the nucleus. It localises to the cytoplasm. The protein resides in the cytoskeleton. It is found in the spindle. The protein localises to the phragmoplast. Its pathway is protein modification; protein ubiquitination. Involved in ubiquitination and subsequent proteasomal degradation of target proteins. Together with CUL1, RBX1 and a F-box protein, it forms a SCF E3 ubiquitin ligase complex. The functional specificity of this complex depends on the type of F-box protein. In the SCF complex, it serves as an adapter that links the F-box protein to CUL1. SCF(UFO) is required for vegetative and floral organ development as well as for male gametogenesis. SCF(TIR1) is involved in auxin signaling pathway. SCF(COI1) regulates responses to jasmonates. SCF(EID1) and SCF(AFR) are implicated in phytochrome A light signaling. SCF(ADO1), SCF(ADO2), SCF(ADO3) are related to the circadian clock. SCF(ORE9) seems to be involved in senescence. SCF(EBF1/EBF2) may regulate ethylene signaling. Plays a role during embryogenesis and early postembryonic development, especially during cell elongation and division. Contributes to the correct chromosome segregation during tetrad formation. The polypeptide is SKP1-like protein 1A (Arabidopsis thaliana (Mouse-ear cress)).